Here is a 741-residue protein sequence, read N- to C-terminus: Melanoma-associated antigen D4 (741 aa).

Residues Met-1–Tyr-13 are compositionally biased toward polar residues. Disordered regions lie at residues Met-1 to Glu-27, Arg-136 to Ser-206, Met-247 to Ala-296, and Pro-323 to Leu-379. The segment covering Ser-14–Glu-27 has biased composition (acidic residues). Polar residues-rich tracts occupy residues Pro-140 to Thr-151 and Thr-187 to Pro-196. The span at Asp-354–Arg-363 shows a compositional bias: acidic residues. The region spanning Leu-413–Ala-611 is the MAGE domain. The disordered stretch occupies residues Val-700–Ser-720. Over residues Ser-701 to Ser-720 the composition is skewed to polar residues.

Interacts with TRIM27. Expressed only in brain and ovary among normal tissues. Isoform 1 and isoform 2 are specifically expressed in glioma cells among cancer cells. Detected in some renal cell carcinoma samples.

May enhance ubiquitin ligase activity of RING-type zinc finger-containing E3 ubiquitin-protein ligases. Proposed to act through recruitment and/or stabilization of the Ubl-conjugating enzyme (E2) at the E3:substrate complex. The chain is Melanoma-associated antigen D4 (MAGED4) from Homo sapiens (Human).